Reading from the N-terminus, the 420-residue chain is UDP-glucuronic acid decarboxylase 1 (420 aa).

Methionine 1 is subject to N-acetylmethionine. Topologically, residues 1–19 (MVSKGLLRLVSSVNRRRMK) are cytoplasmic. The helical; Signal-anchor for type II membrane protein transmembrane segment at 20-40 (LLLGIALFAYAASVWGNFVNM) threads the bilayer. Topologically, residues 41–420 (RSIQENGELK…RVKKGRTRHS (380 aa)) are lumenal. Position 94 is a phosphothreonine (threonine 94). Positions 98, 99, 100, 119, 120, 122, 123, 124, 144, and 145 each coordinate NAD(+). The UDP-alpha-D-glucuronate site is built by leucine 149 and tyrosine 150. Residues leucine 159 and serine 161 each contribute to the NAD(+) site. Lysine 177 is a binding site for UDP-alpha-D-glucuronate. Threonine 178 provides a ligand contact to NAD(+). UDP-alpha-D-glucuronate is bound by residues asparagine 185, glycine 188, lysine 191, and arginine 192. NAD(+) is bound by residues alanine 200, tyrosine 231, and lysine 235. The active-site Proton acceptor is tyrosine 231. Residues tyrosine 245, glutamine 248, and glutamate 249 each coordinate UDP-alpha-D-glucuronate. Threonine 261, histidine 267, and arginine 272 together coordinate NAD(+). A glycan (N-linked (GlcNAc...) asparagine) is linked at asparagine 316.

Belongs to the NAD(P)-dependent epimerase/dehydratase family. UDP-glucuronic acid decarboxylase subfamily. Homodimer and homotetramer. Interacts with AKT1. NAD(+) serves as cofactor.

The protein resides in the golgi apparatus. It localises to the golgi stack membrane. It catalyses the reaction UDP-alpha-D-glucuronate + H(+) = UDP-alpha-D-xylose + CO2. Its pathway is nucleotide-sugar biosynthesis; UDP-alpha-D-xylose biosynthesis; UDP-alpha-D-xylose from UDP-alpha-D-glucuronate: step 1/1. Its function is as follows. Catalyzes the NAD-dependent decarboxylation of UDP-glucuronic acid to UDP-xylose. Necessary for the biosynthesis of the core tetrasaccharide in glycosaminoglycan biosynthesis. In Mus musculus (Mouse), this protein is UDP-glucuronic acid decarboxylase 1 (Uxs1).